Consider the following 186-residue polypeptide: GTP cyclohydrolase 1 2 (186 aa).

Belongs to the GTP cyclohydrolase I family. As to quaternary structure, homomer.

It carries out the reaction GTP + H2O = 7,8-dihydroneopterin 3'-triphosphate + formate + H(+). Its pathway is cofactor biosynthesis; 7,8-dihydroneopterin triphosphate biosynthesis; 7,8-dihydroneopterin triphosphate from GTP: step 1/1. The polypeptide is GTP cyclohydrolase 1 2 (Pseudomonas putida (strain ATCC 47054 / DSM 6125 / CFBP 8728 / NCIMB 11950 / KT2440)).